The following is a 345-amino-acid chain: HTH-type transcriptional regulator reg1 (345 aa).

Residues 1–58 (MTTRLADIAAQAGVSEATVSRVLNGKPGVAATTRQSVLAALDVLGYERPVRLRRRSAG) form the HTH lacI-type domain. The segment at residues 5–24 (LADIAAQAGVSEATVSRVLN) is a DNA-binding region (H-T-H motif).

Its function is as follows. Transcription repressor involved in control of expression of alpha-amylase and chitinase genes and of actinorhodin production. The polypeptide is HTH-type transcriptional regulator reg1 (reg1) (Streptomyces lividans).